We begin with the raw amino-acid sequence, 128 residues long: Ribosome-binding factor A (128 aa).

The protein belongs to the RbfA family. As to quaternary structure, monomer. Binds 30S ribosomal subunits, but not 50S ribosomal subunits or 70S ribosomes.

The protein resides in the cytoplasm. One of several proteins that assist in the late maturation steps of the functional core of the 30S ribosomal subunit. Associates with free 30S ribosomal subunits (but not with 30S subunits that are part of 70S ribosomes or polysomes). Required for efficient processing of 16S rRNA. May interact with the 5'-terminal helix region of 16S rRNA. This Geobacillus thermodenitrificans (strain NG80-2) protein is Ribosome-binding factor A.